A 909-amino-acid polypeptide reads, in one-letter code: SCY1-like protein 2 B (909 aa).

Residues Y39–F343 enclose the Protein kinase domain. 7 HEAT repeats span residues S311 to R348, R350 to S382, R383 to V401, L402 to G439, V465 to Q502, V499 to K537, and F578 to E617. 2 disordered regions span residues N624–T772 and S804–L909. 5 stretches are compositionally biased toward polar residues: residues N638–I648, P678–T712, R724–A747, S804–L828, and K835–K852.

Belongs to the protein kinase superfamily. Interacts with VTI11, VTI12 and CHC1. Expressed in roots, seedlings, leaves, stems, flowers, and, at low levels, in siliques.

It is found in the golgi apparatus membrane. Its subcellular location is the golgi apparatus. The protein localises to the trans-Golgi network membrane. It localises to the prevacuolar compartment membrane. Functionally, probably inactive kinase. Component of the AP2-containing clathrin coat that regulates clathrin-dependent trafficking at plasma membrane, TGN and endosomal system. Together with SCYL2B, required for cell growth, plant growth and development. Essential for polarized root hair development probably by mediating the root hair tip localization of cellulose synthase-like D3 (CSLD3). This chain is SCY1-like protein 2 B, found in Arabidopsis thaliana (Mouse-ear cress).